The following is a 198-amino-acid chain: Threonylcarbamoyl-AMP synthase (198 aa).

Residues 15–198 (LLKIYHIIKL…AISGQLIRRG (184 aa)) enclose the YrdC-like domain.

Belongs to the SUA5 family. TsaC subfamily.

The protein resides in the cytoplasm. The catalysed reaction is L-threonine + hydrogencarbonate + ATP = L-threonylcarbamoyladenylate + diphosphate + H2O. In terms of biological role, required for the formation of a threonylcarbamoyl group on adenosine at position 37 (t(6)A37) in tRNAs that read codons beginning with adenine. Catalyzes the conversion of L-threonine, HCO(3)(-)/CO(2) and ATP to give threonylcarbamoyl-AMP (TC-AMP) as the acyladenylate intermediate, with the release of diphosphate. This Baumannia cicadellinicola subsp. Homalodisca coagulata protein is Threonylcarbamoyl-AMP synthase.